The sequence spans 431 residues: Glutamate-1-semialdehyde 2,1-aminomutase (431 aa).

At Lys-265 the chain carries N6-(pyridoxal phosphate)lysine.

This sequence belongs to the class-III pyridoxal-phosphate-dependent aminotransferase family. HemL subfamily. In terms of assembly, homodimer. The cofactor is pyridoxal 5'-phosphate.

It localises to the cytoplasm. It catalyses the reaction (S)-4-amino-5-oxopentanoate = 5-aminolevulinate. The protein operates within porphyrin-containing compound metabolism; protoporphyrin-IX biosynthesis; 5-aminolevulinate from L-glutamyl-tRNA(Glu): step 2/2. In Aliivibrio fischeri (strain ATCC 700601 / ES114) (Vibrio fischeri), this protein is Glutamate-1-semialdehyde 2,1-aminomutase.